The chain runs to 384 residues: Probable L-tyrosine/L-aspartate decarboxylase (384 aa).

Lys233 carries the post-translational modification N6-(pyridoxal phosphate)lysine.

The protein belongs to the group II decarboxylase family. MfnA subfamily. The cofactor is pyridoxal 5'-phosphate.

It catalyses the reaction L-tyrosine + H(+) = tyramine + CO2. The enzyme catalyses L-aspartate + H(+) = beta-alanine + CO2. The protein operates within cofactor biosynthesis; methanofuran biosynthesis. It functions in the pathway cofactor biosynthesis; coenzyme A biosynthesis. Its function is as follows. Catalyzes the decarboxylation of L-tyrosine to produce tyramine for methanofuran biosynthesis. Can also catalyze the decarboxylation of L-aspartate to produce beta-alanine for coenzyme A (CoA) biosynthesis. The protein is Probable L-tyrosine/L-aspartate decarboxylase of Methanococcus maripaludis (strain C5 / ATCC BAA-1333).